Reading from the N-terminus, the 353-residue chain is Photosystem II protein D1 (353 aa).

An N-acetylthreonine modification is found at threonine 2. The residue at position 2 (threonine 2) is a Phosphothreonine. 3 consecutive transmembrane segments (helical) span residues 29–46, 118–133, and 142–156; these read YIGW…TATS, HFLL…EWEL, and WIAV…AATA. Chlorophyll a is bound at residue histidine 118. Pheophytin a is bound at residue tyrosine 126. [CaMn4O5] cluster is bound by residues aspartate 170 and glutamate 189. A helical membrane pass occupies residues 197–218; it reads FHMLGVAGVFGGSLFSAMHGSL. Histidine 198 is a chlorophyll a binding site. A quinone contacts are provided by residues histidine 215 and 264–265; that span reads SF. Position 215 (histidine 215) interacts with Fe cation. Residue histidine 272 coordinates Fe cation. A helical membrane pass occupies residues 274 to 288; sequence FLAAWPVVGIWFTAL. [CaMn4O5] cluster-binding residues include histidine 332, glutamate 333, aspartate 342, and alanine 344. The propeptide occupies 345–353; it reads SVEAPSVNA.

This sequence belongs to the reaction center PufL/M/PsbA/D family. As to quaternary structure, PSII is composed of 1 copy each of membrane proteins PsbA, PsbB, PsbC, PsbD, PsbE, PsbF, PsbH, PsbI, PsbJ, PsbK, PsbL, PsbM, PsbT, PsbX, PsbY, PsbZ, Psb30/Ycf12, at least 3 peripheral proteins of the oxygen-evolving complex and a large number of cofactors. It forms dimeric complexes. The cofactor is The D1/D2 heterodimer binds P680, chlorophylls that are the primary electron donor of PSII, and subsequent electron acceptors. It shares a non-heme iron and each subunit binds pheophytin, quinone, additional chlorophylls, carotenoids and lipids. D1 provides most of the ligands for the Mn4-Ca-O5 cluster of the oxygen-evolving complex (OEC). There is also a Cl(-1) ion associated with D1 and D2, which is required for oxygen evolution. The PSII complex binds additional chlorophylls, carotenoids and specific lipids.. Tyr-161 forms a radical intermediate that is referred to as redox-active TyrZ, YZ or Y-Z. In terms of processing, C-terminally processed by CTPA; processing is essential to allow assembly of the oxygen-evolving complex and thus photosynthetic growth.

It localises to the plastid. Its subcellular location is the chloroplast thylakoid membrane. The catalysed reaction is 2 a plastoquinone + 4 hnu + 2 H2O = 2 a plastoquinol + O2. Functionally, photosystem II (PSII) is a light-driven water:plastoquinone oxidoreductase that uses light energy to abstract electrons from H(2)O, generating O(2) and a proton gradient subsequently used for ATP formation. It consists of a core antenna complex that captures photons, and an electron transfer chain that converts photonic excitation into a charge separation. The D1/D2 (PsbA/PsbD) reaction center heterodimer binds P680, the primary electron donor of PSII as well as several subsequent electron acceptors. In Oltmannsiellopsis viridis (Marine flagellate), this protein is Photosystem II protein D1.